A 358-amino-acid polypeptide reads, in one-letter code: Cytochrome c peroxidase, mitochondrial (358 aa).

A mitochondrion-targeting transit peptide spans 1–38 (MAASRTATRTLRALRTSTRPALTAAPRAAFRQGGRRLY). The active-site Proton acceptor is the His-119. The interval 192–214 (PYRPGRQDRDAAGCTPDGRLPDA) is disordered. Residue His-242 participates in heme b binding. The active-site Tryptophan radical intermediate is Trp-258.

The protein belongs to the peroxidase family. Cytochrome c peroxidase subfamily. As to quaternary structure, forms a one-to-one complex with cytochrome c. Heme b serves as cofactor.

Its subcellular location is the mitochondrion matrix. The protein resides in the mitochondrion intermembrane space. The enzyme catalyses 2 Fe(II)-[cytochrome c] + H2O2 + 2 H(+) = 2 Fe(III)-[cytochrome c] + 2 H2O. Destroys radicals which are normally produced within the cells and which are toxic to biological systems. In Neurospora crassa (strain ATCC 24698 / 74-OR23-1A / CBS 708.71 / DSM 1257 / FGSC 987), this protein is Cytochrome c peroxidase, mitochondrial (ccp-1).